Consider the following 444-residue polypeptide: Putative permease IIC component YwbA (444 aa).

One can recognise a PTS EIIC type-3 domain in the interval 8-421; the sequence is MEEKIMPVAG…LITCAIYYPF (414 aa). The next 10 membrane-spanning stretches (helical) occupy residues 31–51, 72–92, 104–124, 138–158, 187–207, 223–243, 246–266, 291–311, 349–371, and 402–422; these read GIILTMPLIIIGSVFLILTSL, LGYPVNASFDIMAMIAAFGIA, LSAGAISIAAFLLATPFEVPF, GIPITLLGSKGLFVAMLIALF, FVALIPGFIIVLLVWLARLLI, LGTPLSILGGSLGGSLIAEFV, LLWSCGIHGASIIGGIMAPIW, FFQIWINVGGSGATLALVLTM, PLLIVPFIIAPLLTITATYIGMS, and SGAVMQLVNLLITCAIYYPFF.

The protein resides in the cell membrane. In terms of biological role, the phosphoenolpyruvate-dependent sugar phosphotransferase system (PTS), a major carbohydrate active -transport system, catalyzes the phosphorylation of incoming sugar substrates concomitant with their translocation across the cell membrane. This chain is Putative permease IIC component YwbA (ywbA), found in Bacillus subtilis (strain 168).